Here is a 239-residue protein sequence, read N- to C-terminus: Glycerol-3-phosphate acyltransferase (239 aa).

The next 6 helical transmembrane spans lie at 6 to 26, 61 to 81, 99 to 119, 135 to 155, 159 to 179, and 199 to 219; these read AIAL…SVMF, FLVG…SFLI, YYLT…PLYF, LAIS…VTLI, VSLA…VPWL, and WYII…VFWL.

It belongs to the PlsY family. As to quaternary structure, probably interacts with PlsX.

The protein localises to the cell membrane. It carries out the reaction an acyl phosphate + sn-glycerol 3-phosphate = a 1-acyl-sn-glycero-3-phosphate + phosphate. The protein operates within lipid metabolism; phospholipid metabolism. Functionally, catalyzes the transfer of an acyl group from acyl-phosphate (acyl-PO(4)) to glycerol-3-phosphate (G3P) to form lysophosphatidic acid (LPA). This enzyme utilizes acyl-phosphate as fatty acyl donor, but not acyl-CoA or acyl-ACP. The protein is Glycerol-3-phosphate acyltransferase of Mycoplasma pneumoniae (strain ATCC 29342 / M129 / Subtype 1) (Mycoplasmoides pneumoniae).